The primary structure comprises 227 residues: PKHD-type hydroxylase ACIAD0531 (227 aa).

The Fe2OG dioxygenase domain occupies 78 to 178; that stretch reads HIIPPLFNRY…RFASFFWVQS (101 aa). Residues His96, Asp98, and His159 each coordinate Fe cation. Arg169 contributes to the 2-oxoglutarate binding site.

Requires Fe(2+) as cofactor. L-ascorbate serves as cofactor.

This Acinetobacter baylyi (strain ATCC 33305 / BD413 / ADP1) protein is PKHD-type hydroxylase ACIAD0531.